Consider the following 360-residue polypeptide: Hydroxyproline O-arabinosyltransferase RDN2 (360 aa).

The chain crosses the membrane as a helical; Signal-anchor span at residues 13 to 33 (VLGSSFATYNLVTMIIHYGSA).

The protein localises to the golgi apparatus membrane. The catalysed reaction is trans-4-hydroxy-L-prolyl-[protein] + UDP-beta-L-arabinofuranose = O-(beta-L-arabinofuranosyl)-trans-4-hydroxy-L-prolyl-[protein] + UDP + H(+). In terms of biological role, glycosyltransferase involved in the O-arabinosylation of several proteins including extensins and small signaling peptides. Catalyzes the transfer of the initial L-arabinose to the hydroxyl group of Hyp residues. Probably involved in the arabinosylation of CLAVATA3/ESR-related (CLE) signaling peptides that move from root to shoot, to interact with SUNN receptor kinase signaling that regulates nodulation. Involved in long distance nodulation signaling events. Involved in the autoregulation of nodulation (AON), a long distance systemic signaling from root to shoot and back again, which allows legumes to limit the number of root nodules formed based on available nitrogen and previous rhizobial colonization. Functions in the root, upstream of the shoot receptor kinase SUNN and via CLE peptide, to control AON. The sequence is that of Hydroxyproline O-arabinosyltransferase RDN2 from Medicago truncatula (Barrel medic).